The following is a 316-amino-acid chain: Homoserine O-succinyltransferase (316 aa).

Cys-142 acts as the Acyl-thioester intermediate in catalysis. Residues Lys-163 and Ser-192 each coordinate substrate. Residue His-235 is the Proton acceptor of the active site. The active site involves Glu-237. Residue Arg-249 coordinates substrate.

This sequence belongs to the MetA family.

The protein localises to the cytoplasm. It carries out the reaction L-homoserine + succinyl-CoA = O-succinyl-L-homoserine + CoA. The protein operates within amino-acid biosynthesis; L-methionine biosynthesis via de novo pathway; O-succinyl-L-homoserine from L-homoserine: step 1/1. Functionally, transfers a succinyl group from succinyl-CoA to L-homoserine, forming succinyl-L-homoserine. This chain is Homoserine O-succinyltransferase, found in Shewanella amazonensis (strain ATCC BAA-1098 / SB2B).